We begin with the raw amino-acid sequence, 545 residues long: Glutamine-dependent NAD(+) synthetase (545 aa).

One can recognise a CN hydrolase domain in the interval 5–247 (LRIAMAQFDF…DQWLVVDYMR (243 aa)). Residue Glu-46 is the Proton acceptor; for glutaminase activity of the active site. Lys-113 serves as the catalytic For glutaminase activity. Tyr-119 lines the L-glutamine pocket. Cys-151 acts as the Nucleophile; for glutaminase activity in catalysis. L-glutamine is bound by residues Ser-177 and Lys-183. The tract at residues 269-545 (VWRAVVRGVQ…RYPISNAYRG (277 aa)) is ligase. 292–299 (GLSGGIDS) contacts ATP. Asn-375 contributes to the deamido-NAD(+) binding site. Thr-399 serves as a coordination point for ATP. Residues Glu-404 and Lys-516 each contribute to the deamido-NAD(+) site.

In the C-terminal section; belongs to the NAD synthetase family.

The enzyme catalyses deamido-NAD(+) + L-glutamine + ATP + H2O = L-glutamate + AMP + diphosphate + NAD(+) + H(+). Its pathway is cofactor biosynthesis; NAD(+) biosynthesis; NAD(+) from deamido-NAD(+) (L-Gln route): step 1/1. Catalyzes the ATP-dependent amidation of deamido-NAD to form NAD. Uses L-glutamine as a nitrogen source. This is Glutamine-dependent NAD(+) synthetase from Xylella fastidiosa (strain Temecula1 / ATCC 700964).